The primary structure comprises 144 residues: Large ribosomal subunit protein uL13 (144 aa).

It belongs to the universal ribosomal protein uL13 family. As to quaternary structure, part of the 50S ribosomal subunit.

Its function is as follows. This protein is one of the early assembly proteins of the 50S ribosomal subunit, although it is not seen to bind rRNA by itself. It is important during the early stages of 50S assembly. This is Large ribosomal subunit protein uL13 from Mycoplasmopsis agalactiae (strain NCTC 10123 / CIP 59.7 / PG2) (Mycoplasma agalactiae).